The following is a 237-amino-acid chain: Phosphatidylserine decarboxylase proenzyme (237 aa).

Ser206 acts as the Schiff-base intermediate with substrate; via pyruvic acid in catalysis. At Ser206 the chain carries Pyruvic acid (Ser); by autocatalysis.

The protein belongs to the phosphatidylserine decarboxylase family. PSD-A subfamily. In terms of assembly, heterodimer of a large membrane-associated beta subunit and a small pyruvoyl-containing alpha subunit. Pyruvate serves as cofactor. Is synthesized initially as an inactive proenzyme. Formation of the active enzyme involves a self-maturation process in which the active site pyruvoyl group is generated from an internal serine residue via an autocatalytic post-translational modification. Two non-identical subunits are generated from the proenzyme in this reaction, and the pyruvate is formed at the N-terminus of the alpha chain, which is derived from the carboxyl end of the proenzyme. The post-translation cleavage follows an unusual pathway, termed non-hydrolytic serinolysis, in which the side chain hydroxyl group of the serine supplies its oxygen atom to form the C-terminus of the beta chain, while the remainder of the serine residue undergoes an oxidative deamination to produce ammonia and the pyruvoyl prosthetic group on the alpha chain.

The protein localises to the cell membrane. It catalyses the reaction a 1,2-diacyl-sn-glycero-3-phospho-L-serine + H(+) = a 1,2-diacyl-sn-glycero-3-phosphoethanolamine + CO2. It functions in the pathway phospholipid metabolism; phosphatidylethanolamine biosynthesis; phosphatidylethanolamine from CDP-diacylglycerol: step 2/2. In terms of biological role, catalyzes the formation of phosphatidylethanolamine (PtdEtn) from phosphatidylserine (PtdSer). The protein is Phosphatidylserine decarboxylase proenzyme of Rhodococcus opacus (strain B4).